The following is a 223-amino-acid chain: V-type ATP synthase subunit D (223 aa).

The segment at 203–223 (AREAEEEGGRPNPQVEIGAGL) is disordered.

The protein belongs to the V-ATPase D subunit family.

Produces ATP from ADP in the presence of a proton gradient across the membrane. This chain is V-type ATP synthase subunit D, found in Thermus thermophilus (strain ATCC BAA-163 / DSM 7039 / HB27).